The primary structure comprises 193 residues: Ion-translocating oxidoreductase complex subunit A (193 aa).

Helical transmembrane passes span 5–25 (ALLF…FLGL), 39–59 (IGMG…SWLV), 62–82 (FILV…LVLA), 102–122 (LLGI…VVLL), 134–154 (TIYG…FAAI), and 171–191 (SIAL…TGLV).

It belongs to the NqrDE/RnfAE family. The complex is composed of six subunits: RnfA, RnfB, RnfC, RnfD, RnfE and RnfG.

The protein resides in the cell inner membrane. Part of a membrane-bound complex that couples electron transfer with translocation of ions across the membrane. This is Ion-translocating oxidoreductase complex subunit A from Pectobacterium carotovorum subsp. carotovorum (strain PC1).